Reading from the N-terminus, the 637-residue chain is DNA mismatch repair protein MutL (637 aa).

The segment covering 353–371 (GQGQRPVSSASMPSASRQA) has biased composition (polar residues). The interval 353 to 444 (GQGQRPVSSA…SEAASETPHD (92 aa)) is disordered. Residues 378–389 (DWIKEGVQDWDW) show a composition bias toward basic and acidic residues. Residues 396 to 406 (PQNPPQNPPPG) are compositionally biased toward pro residues. Basic and acidic residues predominate over residues 430–444 (SGKELSEAASETPHD).

The protein belongs to the DNA mismatch repair MutL/HexB family.

This protein is involved in the repair of mismatches in DNA. It is required for dam-dependent methyl-directed DNA mismatch repair. May act as a 'molecular matchmaker', a protein that promotes the formation of a stable complex between two or more DNA-binding proteins in an ATP-dependent manner without itself being part of a final effector complex. The polypeptide is DNA mismatch repair protein MutL (Beijerinckia indica subsp. indica (strain ATCC 9039 / DSM 1715 / NCIMB 8712)).